We begin with the raw amino-acid sequence, 496 residues long: Apolipoprotein N-acyltransferase (496 aa).

6 consecutive transmembrane segments (helical) span residues 6-26, 50-70, 77-97, 114-134, 148-168, and 183-203; these read IICF…FFIP, FGYL…SIGV, FWWA…FFIS, LIFC…CTGL, ILIQ…VIYI, and LKIL…YGAM. One can recognise a CN hydrolase domain in the interval 220–464; sequence VQPSIPQTAK…QGLIPQKLTT (245 aa). Residue glutamate 259 is the Proton acceptor of the active site. Lysine 322 is a catalytic residue. Cysteine 372 acts as the Nucleophile in catalysis. The chain crosses the membrane as a helical span at residues 474-494; the sequence is FAMLLPIVFILLIHYLLSLIF.

The protein belongs to the CN hydrolase family. Apolipoprotein N-acyltransferase subfamily.

The protein localises to the cell inner membrane. It carries out the reaction N-terminal S-1,2-diacyl-sn-glyceryl-L-cysteinyl-[lipoprotein] + a glycerophospholipid = N-acyl-S-1,2-diacyl-sn-glyceryl-L-cysteinyl-[lipoprotein] + a 2-acyl-sn-glycero-3-phospholipid + H(+). The protein operates within protein modification; lipoprotein biosynthesis (N-acyl transfer). Functionally, catalyzes the phospholipid dependent N-acylation of the N-terminal cysteine of apolipoprotein, the last step in lipoprotein maturation. The protein is Apolipoprotein N-acyltransferase of Rickettsia typhi (strain ATCC VR-144 / Wilmington).